We begin with the raw amino-acid sequence, 189 residues long: Glycerol-3-phosphate acyltransferase (189 aa).

5 helical membrane passes run 1 to 21, 51 to 71, 77 to 97, 111 to 131, and 151 to 171; these read MFWL…AILL, LAVL…LIAH, LQQQ…PLYF, MLLG…ALTF, and LLAW…LLIV.

Belongs to the PlsY family. In terms of assembly, probably interacts with PlsX.

The protein resides in the cell inner membrane. It catalyses the reaction an acyl phosphate + sn-glycerol 3-phosphate = a 1-acyl-sn-glycero-3-phosphate + phosphate. It participates in lipid metabolism; phospholipid metabolism. In terms of biological role, catalyzes the transfer of an acyl group from acyl-phosphate (acyl-PO(4)) to glycerol-3-phosphate (G3P) to form lysophosphatidic acid (LPA). This enzyme utilizes acyl-phosphate as fatty acyl donor, but not acyl-CoA or acyl-ACP. The chain is Glycerol-3-phosphate acyltransferase from Pseudomonas fluorescens (strain ATCC BAA-477 / NRRL B-23932 / Pf-5).